Reading from the N-terminus, the 511-residue chain is Maturase K (511 aa).

This sequence belongs to the intron maturase 2 family. MatK subfamily.

The protein localises to the plastid. It is found in the chloroplast. In terms of biological role, usually encoded in the trnK tRNA gene intron. Probably assists in splicing its own and other chloroplast group II introns. This is Maturase K from Maihuenia poeppigii (Hardy cactus).